The sequence spans 541 residues: Chaperonin GroEL (541 aa).

Residues 29 to 32 (TLGP), 86 to 90 (DGTTT), G413, 478 to 480 (NAA), and D494 each bind ATP.

It belongs to the chaperonin (HSP60) family. As to quaternary structure, forms a cylinder of 14 subunits composed of two heptameric rings stacked back-to-back. Interacts with the co-chaperonin GroES.

It localises to the cytoplasm. It catalyses the reaction ATP + H2O + a folded polypeptide = ADP + phosphate + an unfolded polypeptide.. Functionally, together with its co-chaperonin GroES, plays an essential role in assisting protein folding. The GroEL-GroES system forms a nano-cage that allows encapsulation of the non-native substrate proteins and provides a physical environment optimized to promote and accelerate protein folding. This is Chaperonin GroEL from Agathobacter rectalis (strain ATCC 33656 / DSM 3377 / JCM 17463 / KCTC 5835 / VPI 0990) (Eubacterium rectale).